A 73-amino-acid chain; its full sequence is Heterin-2 (73 aa).

Positions 1–22 (MQYKTFLVIFLAYLLVTEEALA) are cleaved as a signal peptide. Positions 47–73 (KRALKNIFDPYQKNLDLELERLLSQLQ) are excised as a propeptide.

This sequence belongs to the non-disulfide-bridged peptide (NDBP) superfamily. Medium-length antimicrobial peptide (group 3) family. Expressed by the venom gland.

It is found in the secreted. It localises to the target cell membrane. Its function is as follows. Amphipathic peptide with potent activities against Gram-positive bacteria (MIC=5.6-30.0 uM) and weaker activities against the tested Gram-negative bacteria (MIC=15 uM to &gt;45 uM). It has high hemolytic activity against human erythrocytes. May act by disrupting the integrity of the bacterial cell membrane. The protein is Heterin-2 of Heterometrus spinifer (Asia giant forest scorpion).